The sequence spans 165 residues: Transcription antitermination protein NusB (165 aa).

This sequence belongs to the NusB family.

Functionally, involved in transcription antitermination. Required for transcription of ribosomal RNA (rRNA) genes. Binds specifically to the boxA antiterminator sequence of the ribosomal RNA (rrn) operons. In Rhodococcus erythropolis (strain PR4 / NBRC 100887), this protein is Transcription antitermination protein NusB.